Consider the following 431-residue polypeptide: Glucose-1-phosphate adenylyltransferase (431 aa).

Beta-D-fructose 1,6-bisphosphate is bound at residue Lys-39. Arg-40, His-46, and Arg-52 together coordinate AMP. Residues Tyr-114, Gly-179, 194-195, and Ser-212 contribute to the alpha-D-glucose 1-phosphate site; that span reads EK. Residues Glu-370 and Arg-386 each coordinate AMP. Residues 419–423 and 429–431 each bind beta-D-fructose 1,6-bisphosphate; these read REMLR and QER.

Belongs to the bacterial/plant glucose-1-phosphate adenylyltransferase family. Homotetramer.

It catalyses the reaction alpha-D-glucose 1-phosphate + ATP + H(+) = ADP-alpha-D-glucose + diphosphate. It functions in the pathway glycan biosynthesis; glycogen biosynthesis. With respect to regulation, allosterically activated by fructose-1,6-bisphosphate (F16BP) and inhibited by AMP. Its function is as follows. Involved in the biosynthesis of ADP-glucose, a building block required for the elongation reactions to produce glycogen. Catalyzes the reaction between ATP and alpha-D-glucose 1-phosphate (G1P) to produce pyrophosphate and ADP-Glc. In Salmonella typhi, this protein is Glucose-1-phosphate adenylyltransferase.